The chain runs to 366 residues: MAGNTFGQLFTVTTFGESHGAGLGCIIDGCPPGLELSEADIQFDLDRRKPGTSRHVTQRREADQVEILSGVFEGKTTGTPIALLIRNTDQRSKDYGNIATSFRPGHADYTYWHKYGTRDYRGGGRSSARETAARVAAGAVAKKWLKEKFGTEITAYVTQVGEKEIRFEGCEHISQNPFFAANHSQIAELENYMDSVRKSLDSVGAKLHIEAANVPVGLGEPVFDRLDAEIAYAMMGINAVKGVEIGAGFDSVTQRGSEHGDELTPQGFLSNHSGGILGGISTGQDIRVNIAIKPTSSIATPRRSIDINGNPIELATHGRHDPCVGLRSAPIAEAMLALVLIDHALRHRAQNADVQVNTPDITLSNK.

NADP(+) contacts are provided by R48 and R54. Residues 125–127 (RSS), 238–239 (NA), G278, 293–297 (KPTSS), and R319 contribute to the FMN site.

The protein belongs to the chorismate synthase family. As to quaternary structure, homotetramer. The cofactor is FMNH2.

The enzyme catalyses 5-O-(1-carboxyvinyl)-3-phosphoshikimate = chorismate + phosphate. The protein operates within metabolic intermediate biosynthesis; chorismate biosynthesis; chorismate from D-erythrose 4-phosphate and phosphoenolpyruvate: step 7/7. Its function is as follows. Catalyzes the anti-1,4-elimination of the C-3 phosphate and the C-6 proR hydrogen from 5-enolpyruvylshikimate-3-phosphate (EPSP) to yield chorismate, which is the branch point compound that serves as the starting substrate for the three terminal pathways of aromatic amino acid biosynthesis. This reaction introduces a second double bond into the aromatic ring system. The chain is Chorismate synthase from Neisseria meningitidis serogroup B (strain ATCC BAA-335 / MC58).